The sequence spans 347 residues: tRNA pseudouridine synthase D (347 aa).

Catalysis depends on D81, which acts as the Nucleophile. Residues 158–304 enclose the TRUD domain; sequence GVPNYFGNQR…MRHDRRAIAL (147 aa).

It belongs to the pseudouridine synthase TruD family.

It carries out the reaction uridine(13) in tRNA = pseudouridine(13) in tRNA. Its function is as follows. Responsible for synthesis of pseudouridine from uracil-13 in transfer RNAs. This is tRNA pseudouridine synthase D from Vibrio vulnificus (strain YJ016).